A 166-amino-acid polypeptide reads, in one-letter code: Large ribosomal subunit protein uL11x (166 aa).

This sequence belongs to the universal ribosomal protein uL11 family.

Functionally, binds directly to 26S ribosomal RNA. The chain is Large ribosomal subunit protein uL11x (RPL12C) from Arabidopsis thaliana (Mouse-ear cress).